Consider the following 891-residue polypeptide: Protein translocase subunit SecA 1 (891 aa).

Residues Gln86, 104 to 108 (GEGKT), and Asp493 each bind ATP. The span at 845–873 (KQVAKPIEASHGDGNRKKAPVVKEKEAGR) shows a compositional bias: basic and acidic residues. The interval 845–891 (KQVAKPIEASHGDGNRKKAPVVKEKEAGRNDPCPCGSGKKYKKCCGE) is disordered. The Zn(2+) site is built by Cys877, Cys879, Cys888, and Cys889.

This sequence belongs to the SecA family. As to quaternary structure, monomer and homodimer. Part of the essential Sec protein translocation apparatus which comprises SecA, SecYEG and auxiliary proteins SecDF. Other proteins may also be involved. Zn(2+) is required as a cofactor.

The protein resides in the cell membrane. Its subcellular location is the cytoplasm. It catalyses the reaction ATP + H2O + cellular proteinSide 1 = ADP + phosphate + cellular proteinSide 2.. Functionally, part of the Sec protein translocase complex. Interacts with the SecYEG preprotein conducting channel. Has a central role in coupling the hydrolysis of ATP to the transfer of proteins into and across the cell membrane, serving as an ATP-driven molecular motor driving the stepwise translocation of polypeptide chains across the membrane. In Alkaliphilus metalliredigens (strain QYMF), this protein is Protein translocase subunit SecA 1.